The primary structure comprises 433 residues: Type I acyl-CoA thioesterase mpaH' (433 aa).

The tract at residues 58-246 (HGVGLPKELY…IKALFGTTAD (189 aa)) is abhydrolase domain. Valine 60 is a substrate binding site. Serine 139 functions as the Nucleophile in the catalytic mechanism. Residue phenylalanine 140 coordinates substrate. Active-site residues include aspartate 163 and histidine 365.

Belongs to the AB hydrolase superfamily. MpaH hydrolase family. As to quaternary structure, homodimer.

The protein resides in the peroxisome matrix. It catalyses the reaction mycophenolyl-CoA + H2O = mycophenolate + CoA + H(+). The protein operates within secondary metabolite biosynthesis; terpenoid biosynthesis. Functionally, type I acyl-CoA thioesterase; part of the gene cluster that mediates the biosynthesis of mycophenolic acid (MPA), the first isolated antibiotic natural product in the world obtained from a culture of Penicillium brevicompactum in 1893. MpaH' acts as a peroxisomal acyl-CoA hydrolase that converts MPA-CoA into the final product MPA. The first step of the pathway is the synthesis of 5-methylorsellinic acid (5MOA) by the cytosolic polyketide synthase mpaC. 5MOA is then converted to the phthalide compound 5,7-dihydroxy-4,6-dimethylphthalide (DHMP) by the endoplasmic reticulum-bound cytochrome P450 monooxygenase mpaDE. MpaDE first catalyzes hydroxylation of 5-MOA to 4,6-dihydroxy-2-(hydroxymethyl)-3-methylbenzoic acid (DHMB). MpaDE then acts as a lactone synthase that catalyzes the ring closure to convert DHMB into DHMP. The next step is the prenylation of DHMP by the Golgi apparatus-associated prenyltransferase mpaA to yield farnesyl-DHMP (FDHMP). The ER-bound oxygenase mpaB then mediates the oxidative cleavage the C19-C20 double bond in FDHMP to yield FDHMP-3C via a mycophenolic aldehyde intermediate. The O-methyltransferase mpaG catalyzes the methylation of FDHMP-3C to yield MFDHMP-3C. After the cytosolic methylation of FDHMP-3C, MFDHMP-3C enters into peroxisomes probably via free diffusion due to its low molecular weight. Upon a peroxisomal CoA ligation reaction, catalyzed by a beta-oxidation component enzyme acyl-CoA ligase ACL891, MFDHMP-3C-CoA would then be restricted to peroxisomes for the following beta-oxidation pathway steps. The peroxisomal beta-oxidation machinery than converts MFDHMP-3C-CoA into MPA_CoA, via a beta-oxidation chain-shortening process. Finally mpaH acts as a peroxisomal acyl-CoA hydrolase with high substrate specificity toward MPA-CoA to release the final product MPA. The polypeptide is Type I acyl-CoA thioesterase mpaH' (Penicillium brevicompactum).